We begin with the raw amino-acid sequence, 114 residues long: Iron-sulfur cluster insertion protein ErpA (114 aa).

Iron-sulfur cluster-binding residues include C42, C106, and C108.

Belongs to the HesB/IscA family. In terms of assembly, homodimer. It depends on iron-sulfur cluster as a cofactor.

Its function is as follows. Required for insertion of 4Fe-4S clusters for at least IspG. The protein is Iron-sulfur cluster insertion protein ErpA of Edwardsiella ictaluri (strain 93-146).